Consider the following 786-residue polypeptide: Endonuclease MutS2 (786 aa).

332–339 lines the ATP pocket; sequence GPNTGGKT. The region spanning 711–786 is the Smr domain; it reads VDLRGMDSIE…GTGVTIVELK (76 aa).

It belongs to the DNA mismatch repair MutS family. MutS2 subfamily. As to quaternary structure, homodimer. Binds to stalled ribosomes, contacting rRNA.

In terms of biological role, endonuclease that is involved in the suppression of homologous recombination and thus may have a key role in the control of bacterial genetic diversity. Functionally, acts as a ribosome collision sensor, splitting the ribosome into its 2 subunits. Detects stalled/collided 70S ribosomes which it binds and splits by an ATP-hydrolysis driven conformational change. Acts upstream of the ribosome quality control system (RQC), a ribosome-associated complex that mediates the extraction of incompletely synthesized nascent chains from stalled ribosomes and their subsequent degradation. Probably generates substrates for RQC. The sequence is that of Endonuclease MutS2 from Clostridium kluyveri (strain NBRC 12016).